The following is a 1023-amino-acid chain: MELPGDGVHLASYGPRAPQLAVNGKAPAGGLDGSGYYQCYRDGSSVASRGSDAPTGYDTVDAPPHYDFYANTEVWGRRRRVRPSLYQLSVDPEQDDFKPPMYEETAGERMGGGDSSEEEEEEHKEPPPEPPRFGWVQGVMIRCMLNIWGVILYLRLPWITAQAGIGLTWVIILLSSFITGITGLSTSAIATNGKVKGGGTYFLISRSLGPELGGSIGLIFAFANAVAVAMHTVGFAETVTDLMRENGVVMVDPINDIRIVGVITVTCLLGISMAGMEWESKAQVLFFLVIMVSFVNYIVGTIIPASPQKQAKGFFSYKAEIFAANFVPGWRGKEGSFFGMFSIFFPSATGILAGANISGDLKDPTVAIPRGTLMAIFWTTISYLIISATIGACVVRDASGELNDTLSYSSSSENCSGLACQYRWDFSECIKNNTCKHGIMNYYQSMSLVSAFAPLISAGIFGATLSSALACLVSAPKVFQCLCKDQLYPLIGFFGKGYGKNAEPLRAYLLTYVIAVCFVLIAELNTIAPIISNFFLCSYALINFSCFHASVTNSPGWRPSFRFYSKWLSLLGAVCCVVIMFLLTWWAALIAFGVVFFLLGYTLYKKPAVNWGSSVQASSYSMALNQCVGLNQVEDHVKNYRPQCLVLTGPPCCRPALVDLVGCLTKRLSLMMCGHVVTAGPSPVSERHVTWLNQRKVRSFYRGVVAADLRSGVNMLLQGAGLGRIKPNVLLMGFKKDWGCDSPQAAHHYIGILHDAFDLHYGVCVLRVKEGLDASHPPQCHVNPGFDGGPESINTVCAPACVQTSVTSSVSMDPDPQPSSVFQKKQGKKTIDIYWLSDDGGLTLLLPYLLTRRKRWAGCKVRVFVGGDTDKKEEQKEEVLALIKKFRLGFHDVEVLPDIHQPPQPGNVDHFEDSVNRFRLETNPKQDSDSGPQQQQQEEPWMITEQDLERNRAKSLRQIRLNEVLQVHSREAALIVITMPVGRRGVCPSTLFLAWLDVLSRDLRPPVLLVRGNQENVLTFYCQ.

At 1-134 the chain is on the cytoplasmic side; the sequence is MELPGDGVHL…EPPPEPPRFG (134 aa). The segment at 91 to 131 is disordered; it reads DPEQDDFKPPMYEETAGERMGGGDSSEEEEEEHKEPPPEPP. Residues 135-164 traverse the membrane as a discontinuously helical segment; sequence WVQGVMIRCMLNIWGVILYLRLPWITAQAG. Na(+) is bound by residues Leu145 and Trp148. Residues 165–186 form a helical membrane-spanning segment; it reads IGLTWVIILLSSFITGITGLST. At 187-217 the chain is on the cytoplasmic side; that stretch reads SAIATNGKVKGGGTYFLISRSLGPELGGSIG. Residues 218-240 traverse the membrane as a helical segment; it reads LIFAFANAVAVAMHTVGFAETVT. Over 241 to 252 the chain is Extracellular; that stretch reads DLMRENGVVMVD. Helical transmembrane passes span 253–277 and 278–300; these read PINDIRIVGVITVTCLLGISMAGME and WESKAQVLFFLVIMVSFVNYIVG. Residues 301 to 335 lie on the Extracellular side of the membrane; sequence TIIPASPQKQAKGFFSYKAEIFAANFVPGWRGKEG. The chain crosses the membrane as a discontinuously helical span at residues 336–357; that stretch reads SFFGMFSIFFPSATGILAGANI. The chloride site is built by Gly350, Ile351, and Leu352. Over 358-368 the chain is Cytoplasmic; it reads SGDLKDPTVAI. A helical membrane pass occupies residues 369 to 390; the sequence is PRGTLMAIFWTTISYLIISATI. Residues 391–452 lie on the Extracellular side of the membrane; that stretch reads GACVVRDASG…YQSMSLVSAF (62 aa). N-linked (GlcNAc...) asparagine glycans are attached at residues Asn403 and Asn414. 2 disulfide bridges follow: Cys415–Cys420 and Cys429–Cys435. N-linked (GlcNAc...) asparagine glycosylation is present at Asn432. Residues 453 to 476 form a helical membrane-spanning segment; it reads APLISAGIFGATLSSALACLVSAP. 3 residues coordinate Na(+): Ala463, Ser466, and Ser467. The Cytoplasmic segment spans residues 477-506; it reads KVFQCLCKDQLYPLIGFFGKGYGKNAEPLR. The helical transmembrane segment at 507–521 threads the bilayer; sequence AYLLTYVIAVCFVLI. Over 522–526 the chain is Extracellular; the sequence is AELNT. Residues 527–543 traverse the membrane as a helical segment; it reads IAPIISNFFLCSYALIN. Tyr539 contacts chloride. The Cytoplasmic portion of the chain corresponds to 544 to 566; it reads FSCFHASVTNSPGWRPSFRFYSK. 2 helical membrane-spanning segments follow: residues 567–586 and 587–598; these read WLSLLGAVCCVVIMFLLTWW and AALIAFGVVFFL. Topologically, residues 599-1023 are cytoplasmic; it reads LGYTLYKKPA…QENVLTFYCQ (425 aa). Positions 614 to 629 are scissor helix; it reads SVQASSYSMALNQCVG. The ATP site is built by Leu647, Arg654, Val676, Gly733, and Leu772.

It belongs to the SLC12A transporter family. In terms of assembly, homodimer; adopts a domain-swap conformation at the scissor helices connecting the transmembrane domain and C-terminal domain. Expressed in urinary bladder, intestine, ovary, skeletal muscle, eye, brain, and kidney.

It is found in the cell membrane. The enzyme catalyses chloride(out) + Na(+)(out) = chloride(in) + Na(+)(in). Inhibited by thiazide-type diuretics including polythiazide, metolazone, cyclothiazide, hydrochlorothiazide and chlorthalidone. Thiazide drugs, specifically inhibit SLC12A3/NCC transporter activity by competing with chloride for binding. Electroneutral sodium and chloride ion cotransporter, with a coupling ratio 1 Na(+):1 Cl(-). Mediates sodium and chloride reabsorption. The protein is Solute carrier family 12 member 3 (slc12a3) of Pseudopleuronectes americanus (Winter flounder).